A 308-amino-acid chain; its full sequence is Aspartate carbamoyltransferase catalytic subunit (308 aa).

Residues arginine 57 and threonine 58 each contribute to the carbamoyl phosphate site. An L-aspartate-binding site is contributed by lysine 86. The carbamoyl phosphate site is built by arginine 107, histidine 135, and glutamine 138. The L-aspartate site is built by arginine 167 and arginine 228. The carbamoyl phosphate site is built by leucine 267 and proline 268.

The protein belongs to the aspartate/ornithine carbamoyltransferase superfamily. ATCase family. Heterooligomer of catalytic and regulatory chains.

The catalysed reaction is carbamoyl phosphate + L-aspartate = N-carbamoyl-L-aspartate + phosphate + H(+). It participates in pyrimidine metabolism; UMP biosynthesis via de novo pathway; (S)-dihydroorotate from bicarbonate: step 2/3. Its function is as follows. Catalyzes the condensation of carbamoyl phosphate and aspartate to form carbamoyl aspartate and inorganic phosphate, the committed step in the de novo pyrimidine nucleotide biosynthesis pathway. This chain is Aspartate carbamoyltransferase catalytic subunit, found in Methanococcoides burtonii (strain DSM 6242 / NBRC 107633 / OCM 468 / ACE-M).